Reading from the N-terminus, the 415-residue chain is Multidrug resistance protein MdtA (415 aa).

The signal sequence occupies residues 1 to 21; it reads MKGSYKSRWVIVIVVVIAAIA. Residues 31 to 47 are compositionally biased toward polar residues; sequence DSQSAAPGATKQAQQSP. Disordered stretches follow at residues 31–56 and 390–415; these read DSQS…GMRA and VVET…GARS. The segment covering 399–415 has biased composition (basic and acidic residues); sequence PEEKATSREYAKKGARS.

It belongs to the membrane fusion protein (MFP) (TC 8.A.1) family. Part of a tripartite efflux system composed of MdtA, MdtB and MdtC.

It localises to the cell inner membrane. Its function is as follows. The MdtABC tripartite complex confers resistance against novobiocin and deoxycholate. This Escherichia coli O6:H1 (strain CFT073 / ATCC 700928 / UPEC) protein is Multidrug resistance protein MdtA.